A 330-amino-acid chain; its full sequence is Ketol-acid reductoisomerase (NADP(+)) (330 aa).

Positions 1-181 (MNVYYEQDAD…GGTKAGVIET (181 aa)) constitute a KARI N-terminal Rossmann domain. Residues 24-27 (YGSQ), arginine 47, serine 50, serine 52, and 82-85 (DQNQ) each bind NADP(+). The active site involves histidine 107. Glycine 133 is an NADP(+) binding site. One can recognise a KARI C-terminal knotted domain in the interval 182–327 (SIKNETETDL…AKLRDMMSWL (146 aa)). 4 residues coordinate Mg(2+): aspartate 190, glutamate 194, glutamate 226, and glutamate 230. Serine 251 is a binding site for substrate.

It belongs to the ketol-acid reductoisomerase family. The cofactor is Mg(2+).

It catalyses the reaction (2R)-2,3-dihydroxy-3-methylbutanoate + NADP(+) = (2S)-2-acetolactate + NADPH + H(+). The enzyme catalyses (2R,3R)-2,3-dihydroxy-3-methylpentanoate + NADP(+) = (S)-2-ethyl-2-hydroxy-3-oxobutanoate + NADPH + H(+). Its pathway is amino-acid biosynthesis; L-isoleucine biosynthesis; L-isoleucine from 2-oxobutanoate: step 2/4. The protein operates within amino-acid biosynthesis; L-valine biosynthesis; L-valine from pyruvate: step 2/4. Functionally, involved in the biosynthesis of branched-chain amino acids (BCAA). Catalyzes an alkyl-migration followed by a ketol-acid reduction of (S)-2-acetolactate (S2AL) to yield (R)-2,3-dihydroxy-isovalerate. In the isomerase reaction, S2AL is rearranged via a Mg-dependent methyl migration to produce 3-hydroxy-3-methyl-2-ketobutyrate (HMKB). In the reductase reaction, this 2-ketoacid undergoes a metal-dependent reduction by NADPH to yield (R)-2,3-dihydroxy-isovalerate. The chain is Ketol-acid reductoisomerase (NADP(+)) from Pelodictyon phaeoclathratiforme (strain DSM 5477 / BU-1).